The primary structure comprises 299 residues: Tyrosine recombinase XerC (299 aa).

Residues 2 to 88 (SALQPLIDTY…ALRSFLDYLV (87 aa)) form the Core-binding (CB) domain. The Tyr recombinase domain maps to 109–289 (PLPKNVSVDD…DFQHLSKIYD (181 aa)). Active-site residues include Arg-148, Lys-172, His-241, Arg-244, and His-267. The active-site O-(3'-phospho-DNA)-tyrosine intermediate is Tyr-276.

It belongs to the 'phage' integrase family. XerC subfamily. In terms of assembly, forms a cyclic heterotetrameric complex composed of two molecules of XerC and two molecules of XerD.

It localises to the cytoplasm. Its function is as follows. Site-specific tyrosine recombinase, which acts by catalyzing the cutting and rejoining of the recombining DNA molecules. The XerC-XerD complex is essential to convert dimers of the bacterial chromosome into monomers to permit their segregation at cell division. It also contributes to the segregational stability of plasmids. The protein is Tyrosine recombinase XerC of Psychromonas ingrahamii (strain DSM 17664 / CCUG 51855 / 37).